The following is a 347-amino-acid chain: Microtubule-associated protein Jupiter (347 aa).

The span at 1-14 (MISNFDCTDNQASS) shows a compositional bias: polar residues. Residues 1–33 (MISNFDCTDNQASSKVLRPPGGGSSDIFGSEMP) are disordered. At Ser-24 the chain carries Phosphoserine. Thr-35 and Thr-96 each carry phosphothreonine. Phosphoserine occurs at positions 105, 134, and 145. 2 disordered regions span residues 127–193 (HYNG…PTPP) and 303–347 (GNPV…SGLW). Residues 132–145 (SGSVSSASSSVSSS) are compositionally biased toward low complexity. Over residues 146-164 (TENLKMNSGSRSVFRNMST) the composition is skewed to polar residues. The segment covering 181–193 (PPSPVPIEVPTPP) has biased composition (pro residues).

This sequence belongs to the MAP Jupiter family.

The protein resides in the nucleus. The protein localises to the cytoplasm. Its subcellular location is the cytoskeleton. It is found in the spindle. Binds to all microtubule populations. The polypeptide is Microtubule-associated protein Jupiter (Drosophila yakuba (Fruit fly)).